The primary structure comprises 84 residues: Small ribosomal subunit protein uS17c (84 aa).

The protein belongs to the universal ribosomal protein uS17 family. Part of the 30S ribosomal subunit.

It is found in the plastid. The protein localises to the chloroplast. Its function is as follows. One of the primary rRNA binding proteins, it binds specifically to the 5'-end of 16S ribosomal RNA. This is Small ribosomal subunit protein uS17c (rps17) from Thalassiosira pseudonana (Marine diatom).